The following is a 273-amino-acid chain: Undecaprenyl-diphosphatase (273 aa).

8 consecutive transmembrane segments (helical) span residues 13-35 (GLVEGFTEFLPISSTGHLIVFGN), 45-62 (VFEIAIQLGAVLAVVFEY), 82-102 (FVLNLAIAFIPAAVMGLLFGK), 108-128 (LFNPLSVAVMLVLGGLFILWV), 144-164 (ALRPIDALMIGVAQVFALIPG), 186-206 (TEFSFFLAVPMMVAATAYDVL), 219-239 (LILIGFVAAFVSGLVAVKALL), and 250-270 (FAYYRIVFGIAIIILWLSGWI).

Belongs to the UppP family.

The protein localises to the cell inner membrane. The enzyme catalyses di-trans,octa-cis-undecaprenyl diphosphate + H2O = di-trans,octa-cis-undecaprenyl phosphate + phosphate + H(+). In terms of biological role, catalyzes the dephosphorylation of undecaprenyl diphosphate (UPP). Confers resistance to bacitracin. The polypeptide is Undecaprenyl-diphosphatase (Neisseria meningitidis serogroup C (strain 053442)).